A 1137-amino-acid polypeptide reads, in one-letter code: DENN domain-containing protein 2B (1137 aa).

Polar residues predominate over residues 1 to 12 (MTMTANKNSSIT). The interval 1–99 (MTMTANKNSS…PTCPFKTASF (99 aa)) is disordered. Residues Ser-30 and Ser-32 each carry the phosphoserine modification. The segment covering 32–43 (SPPPVLSPPRSP) has biased composition (pro residues). Residues 49-64 (DSETSACRYPSHSSSR) show a composition bias toward polar residues. Positions 73-92 (PAPSPQNPQDPSPDTSPPTC) are enriched in pro residues. Thr-231 is modified (phosphothreonine). Ser-233 carries the phosphoserine modification. The tract at residues 293–573 (KEQPGRGLPQ…HRLPRLPKRH (281 aa)) is disordered. Positions 324 to 348 (EEPAGGASVSAGSRAVGVAGVAGEA) are enriched in low complexity. At Thr-364 the chain carries Phosphothreonine. Ser-368 bears the Phosphoserine mark. A compositionally biased stretch (low complexity) spans 368 to 380 (SPSSQRLPSKSSL). Over residues 392–402 (RTFEYEADKNP) the composition is skewed to basic and acidic residues. Residues 401–447 (NPKSKPSNGLPPSPTPAAPPPLPSTPAPPVTRRPKKDMRGHRKSQSR) are interaction with ABL1. Pro residues predominate over residues 409-431 (GLPPSPTPAAPPPLPSTPAPPVT). The segment covering 432–446 (RRPKKDMRGHRKSQS) has biased composition (basic residues). The span at 456–481 (SSLQSLYPSSPTENGTENQPKFGSKS) shows a compositional bias: polar residues. Phosphothreonine is present on Thr-482. Residues 495 to 508 (LPKENPYEDVDLKS) show a composition bias toward basic and acidic residues. 2 stretches are compositionally biased toward polar residues: residues 514-524 (KSQQLSENSLD) and 539-558 (SPPT…SGNW). Residue Ser-545 is modified to Phosphoserine. The span at 562–573 (KSHRLPRLPKRH) shows a compositional bias: basic residues. Phosphoserine is present on residues Ser-574 and Ser-622. The disordered stretch occupies residues 641–661 (IETASLRDENSESESDSDDRF). The uDENN domain maps to 698-846 (EYFVVVSLKK…PFPAPGKTIK (149 aa)). The cDENN domain maps to 868-1001 (RLEHVDFECL…LQAALEQALE (134 aa)). One can recognise a dDENN domain in the interval 1003–1096 (KNELISQDSD…QDRELRKCRA (94 aa)).

As to quaternary structure, interacts with ITSN1 and GRB2. Isoform 1 interacts with the SH3 domain of ABL1. In terms of processing, phosphorylated. Phosphorylation decreases ITSN1 binding. In terms of tissue distribution, widely expressed with the exception of peripheral blood lymphocytes. Isoform 1 is expressed in several epithelial and fibroblast (including tumorigenic) but absent in lymphoid cell lines (at protein level). Isoform 3 is expressed in primary cell or weakly tumorigenic but not in tumorigenic cell lines (at protein level).

The protein resides in the cytoplasm. The protein localises to the cell cortex. It localises to the cell membrane. It is found in the recycling endosome. Its function is as follows. May be involved in cytoskeletal organization and tumorogenicity. Seems to be involved in a signaling transduction pathway leading to activation of MAPK1/ERK2. Plays a role in EGFR trafficking from recycling endosomes back to the cell membrane. Guanine nucleotide exchange factor (GEF) which may activate RAB9A and RAB9B. Promotes the exchange of GDP to GTP, converting inactive GDP-bound Rab proteins into their active GTP-bound form. In terms of biological role, may block ERK2 activation stimulated by ABL1. May alter cell morphology and cell growth. The sequence is that of DENN domain-containing protein 2B from Homo sapiens (Human).